We begin with the raw amino-acid sequence, 530 residues long: Protein transport protein SEC9 (530 aa).

The disordered stretch occupies residues 1–274; it reads MGIKKMFQKK…QPANDYNLDL (274 aa). The span at 8–22 shows a compositional bias: basic and acidic residues; it reads QKKEPTEQEIREELS. 2 stretches are compositionally biased toward low complexity: residues 61–100 and 122–141; these read NPYA…NNGG and GSSP…SSNP. The span at 142–160 shows a compositional bias: polar residues; that stretch reads YGNNNGSRSSQNTSSPYAK. Residues 161–202 show a composition bias toward low complexity; the sequence is STNNSSYSNSPYSGSTVNNGNRGGHSNNSNSSAGGNPYAAGG. Composition is skewed to polar residues over residues 203-228 and 258-268; these read RSSQ…RQTQ and RNQQSSQQPAN. T-SNARE coiled-coil homology domains are found at residues 313 to 375 and 467 to 529; these read KFVK…VKEL and DDME…LNNI.

Belongs to the SNAP-25 family.

Its subcellular location is the membrane. Functionally, late secretory t-SNARE protein required for secretion and proper cytokinesis. Plays an important role in the secretion of virulence-associated extracellular enzymes and vesicle-mediated polarized hyphal growth. In Candida albicans (strain SC5314 / ATCC MYA-2876) (Yeast), this protein is Protein transport protein SEC9 (SEC9).